The sequence spans 224 residues: Orotidine 5'-phosphate decarboxylase (224 aa).

Substrate contacts are provided by residues Asp10, Lys32, 59–68 (DLKLHDIPNT), Thr115, Arg175, Gln184, Gly204, and Arg205. Catalysis depends on Lys61, which acts as the Proton donor.

Belongs to the OMP decarboxylase family. Type 1 subfamily. Homodimer.

The catalysed reaction is orotidine 5'-phosphate + H(+) = UMP + CO2. The protein operates within pyrimidine metabolism; UMP biosynthesis via de novo pathway; UMP from orotate: step 2/2. In terms of biological role, catalyzes the decarboxylation of orotidine 5'-monophosphate (OMP) to uridine 5'-monophosphate (UMP). This Sphingopyxis alaskensis (strain DSM 13593 / LMG 18877 / RB2256) (Sphingomonas alaskensis) protein is Orotidine 5'-phosphate decarboxylase.